The chain runs to 695 residues: tRNA wybutosine-synthesizing protein 4 (695 aa).

S-adenosyl-L-methionine contacts are provided by residues Lys-38, Arg-88, Gly-115, 146–147, 196–197, and Glu-224; these read DY and DL. Arg-88 (proton donor; for both methylation and methoxycarbonylation activities) is an active-site residue. Residue Tyr-229 is the Proton acceptor; for methoxycarbonylation activity of the active site.

It belongs to the methyltransferase superfamily. LCMT family.

The protein localises to the cytoplasm. It localises to the mitochondrion. It catalyses the reaction 7-[(3S)-3-amino-3-carboxypropyl]wyosine(37) in tRNA(Phe) + S-adenosyl-L-methionine = 7-[(3S)-(3-amino-3-methoxycarbonyl)propyl]wyosine(37) in tRNA(Phe) + S-adenosyl-L-homocysteine. The catalysed reaction is 7-[(3S)-(3-amino-3-methoxycarbonyl)propyl]wyosine(37) in tRNA(Phe) + S-adenosyl-L-methionine + CO2 = wybutosine(37) in tRNA(Phe) + S-adenosyl-L-homocysteine + 2 H(+). The protein operates within tRNA modification; wybutosine-tRNA(Phe) biosynthesis. In terms of biological role, S-adenosyl-L-methionine-dependent methyltransferase that acts as a component of the wybutosine biosynthesis pathway. Wybutosine is a hyper modified guanosine with a tricyclic base found at the 3'-position adjacent to the anticodon of eukaryotic phenylalanine tRNA. Catalyzes the final 2 independent reactions, methylation of the alpha-carboxy group of wybutosine-72 to form wybutosine-58, and methoxycarbonylation of alpha-amino group of wybutosine-58 through the fixation of CO(2) to complete wybutosine. This Saccharomyces cerevisiae (strain ATCC 204508 / S288c) (Baker's yeast) protein is tRNA wybutosine-synthesizing protein 4 (PPM2).